The primary structure comprises 89 residues: Acylphosphatase (89 aa).

Positions 3–89 (RKEFLVSGRV…DTREKRFSTY (87 aa)) constitute an Acylphosphatase-like domain. Catalysis depends on residues Arg-18 and Asn-36.

Belongs to the acylphosphatase family.

It catalyses the reaction an acyl phosphate + H2O = a carboxylate + phosphate + H(+). This is Acylphosphatase (acyP) from Clostridium perfringens (strain ATCC 13124 / DSM 756 / JCM 1290 / NCIMB 6125 / NCTC 8237 / Type A).